We begin with the raw amino-acid sequence, 376 residues long: D-alanine--D-alanine ligase B (376 aa).

In terms of domain architecture, ATP-grasp spans 155 to 361; sequence KRLMRDAGLP…QTDLMDKLIA (207 aa). 184-239 contributes to the ATP binding site; sequence AALGTPDLFVKPANLGSSVGVSRARSEEEFAASCALAFRYDRKILVEQALNGAREI. 3 residues coordinate Mg(2+): aspartate 316, glutamate 328, and asparagine 330.

This sequence belongs to the D-alanine--D-alanine ligase family. The cofactor is Mg(2+). Mn(2+) is required as a cofactor.

Its subcellular location is the cytoplasm. It carries out the reaction 2 D-alanine + ATP = D-alanyl-D-alanine + ADP + phosphate + H(+). It functions in the pathway cell wall biogenesis; peptidoglycan biosynthesis. Cell wall formation. The polypeptide is D-alanine--D-alanine ligase B (Bradyrhizobium diazoefficiens (strain JCM 10833 / BCRC 13528 / IAM 13628 / NBRC 14792 / USDA 110)).